A 184-amino-acid chain; its full sequence is Ribosome-recycling factor (184 aa).

A compositionally biased stretch (basic and acidic residues) spans 133–162 (RDGMDNLKQDENKKEISEDERKRHETEVQK). The tract at residues 133-163 (RDGMDNLKQDENKKEISEDERKRHETEVQKL) is disordered.

The protein belongs to the RRF family.

It localises to the cytoplasm. In terms of biological role, responsible for the release of ribosomes from messenger RNA at the termination of protein biosynthesis. May increase the efficiency of translation by recycling ribosomes from one round of translation to another. The polypeptide is Ribosome-recycling factor (Sphingopyxis alaskensis (strain DSM 13593 / LMG 18877 / RB2256) (Sphingomonas alaskensis)).